The sequence spans 276 residues: Small ribosomal subunit protein uS3 (276 aa).

Positions 43-111 constitute a KH type-2 domain; the sequence is IRQLMSTGME…QVQLNILEVK (69 aa). Positions 218 to 227 are enriched in low complexity; that stretch reads AQAASAPSRG. The segment at 218 to 276 is disordered; the sequence is AQAASAPSRGPRSDRGGRPGGADRGDRRRRNDRPAADAAPAAEAPAVEAAPAAAEGGQA. A compositionally biased stretch (basic and acidic residues) spans 228–243; it reads PRSDRGGRPGGADRGD. Residues 253-276 are compositionally biased toward low complexity; sequence ADAAPAAEAPAVEAAPAAAEGGQA.

This sequence belongs to the universal ribosomal protein uS3 family. In terms of assembly, part of the 30S ribosomal subunit. Forms a tight complex with proteins S10 and S14.

In terms of biological role, binds the lower part of the 30S subunit head. Binds mRNA in the 70S ribosome, positioning it for translation. This is Small ribosomal subunit protein uS3 from Pseudarthrobacter chlorophenolicus (strain ATCC 700700 / DSM 12829 / CIP 107037 / JCM 12360 / KCTC 9906 / NCIMB 13794 / A6) (Arthrobacter chlorophenolicus).